Consider the following 78-residue polypeptide: MSLLGMFGHSSQKSATLARERLKLVLSHERTANIPYLEDMQKEILQVVQKYTRSSKIEFSTNSNQNINTLEVEITLGN.

The protein belongs to the MinE family.

Prevents the cell division inhibition by proteins MinC and MinD at internal division sites while permitting inhibition at polar sites. This ensures cell division at the proper site by restricting the formation of a division septum at the midpoint of the long axis of the cell. In Helicobacter hepaticus (strain ATCC 51449 / 3B1), this protein is Cell division topological specificity factor.